A 105-amino-acid polypeptide reads, in one-letter code: Nitrogenase-stabilizing/protective protein NifW 2 (105 aa).

This sequence belongs to the NifW family.

In terms of biological role, may protect the nitrogenase Fe-Mo protein from oxidative damage. This chain is Nitrogenase-stabilizing/protective protein NifW 2 (nifW2), found in Trichormus variabilis (strain ATCC 29413 / PCC 7937) (Anabaena variabilis).